The sequence spans 447 residues: Argininosuccinate synthase (447 aa).

Residues 17 to 25 (AFSGGLDTS) and A43 contribute to the ATP site. Residue Y99 coordinates L-citrulline. The ATP site is built by G129 and T131. Residues T131, N135, and D136 each contribute to the L-aspartate site. Residue N135 participates in L-citrulline binding. D136 contributes to the ATP binding site. R139 and S192 together coordinate L-citrulline. D194 provides a ligand contact to ATP. L-citrulline is bound by residues T201, E203, and E280.

This sequence belongs to the argininosuccinate synthase family. Type 2 subfamily. In terms of assembly, homotetramer.

The protein resides in the cytoplasm. It catalyses the reaction L-citrulline + L-aspartate + ATP = 2-(N(omega)-L-arginino)succinate + AMP + diphosphate + H(+). It participates in amino-acid biosynthesis; L-arginine biosynthesis; L-arginine from L-ornithine and carbamoyl phosphate: step 2/3. This Escherichia coli O9:H4 (strain HS) protein is Argininosuccinate synthase.